The primary structure comprises 212 residues: uncharacterized protein (212 aa).

A run of 4 helical transmembrane segments spans residues 34 to 54 (IFGI…PAPG), 59 to 79 (FGVL…ELWL), 126 to 146 (ILMG…IPGT), and 171 to 191 (AGMI…YVFF).

To R.meliloti ExoD.

It localises to the cell membrane. This is an uncharacterized protein from Synechocystis sp. (strain ATCC 27184 / PCC 6803 / Kazusa).